A 256-amino-acid polypeptide reads, in one-letter code: Deoxyribose-phosphate aldolase (256 aa).

The active-site Proton donor/acceptor is aspartate 102. Lysine 165 functions as the Schiff-base intermediate with acetaldehyde in the catalytic mechanism. The active-site Proton donor/acceptor is lysine 197.

Belongs to the DeoC/FbaB aldolase family. DeoC type 2 subfamily.

The protein resides in the cytoplasm. The catalysed reaction is 2-deoxy-D-ribose 5-phosphate = D-glyceraldehyde 3-phosphate + acetaldehyde. It participates in carbohydrate degradation; 2-deoxy-D-ribose 1-phosphate degradation; D-glyceraldehyde 3-phosphate and acetaldehyde from 2-deoxy-alpha-D-ribose 1-phosphate: step 2/2. In terms of biological role, catalyzes a reversible aldol reaction between acetaldehyde and D-glyceraldehyde 3-phosphate to generate 2-deoxy-D-ribose 5-phosphate. The sequence is that of Deoxyribose-phosphate aldolase from Shewanella baltica (strain OS155 / ATCC BAA-1091).